Consider the following 735-residue polypeptide: MCSTNPGKWVTFDDDPAVQSSQKSKNFPLENQGVCRPNGLKLNLPGLREFPSGSSSTSSTPLSSPIVDFYFSPGPPSNSPLSTPTKDFPGFPGIPKAGTHVLYPIPESSSDSPLAISGGESSLLPTRPTCLSHALLPSDHSCTHPTPKVGLPDEVNPQQAESLGFQSDDLPQFQYFREDCAFSSPFWKDEGSDSHFTLDPPGSKKMFSSRNKEMPIDQKSLNKCSLNYICEKLEHLQSAENQDSLRSLSMHCLCAEENASSFVPHTLFRSQPKSGWSFMLRIPEKKNMMSSRQWGPIFLKVLPGGILQMYYEQGLEKPFKEIQLDPYCRLSEPKVENFSVAGKIHTVKIEHVSYTEKRKYHSKTEVVHEPDIEQMLKLGSTSYHDFLDFLTTVEEELMKLPAVSKPKKNYEEQEISLEIVDNFWGKVTKEGKFVESAVITQIYCLCFVNGNLECFLTLNDLELPKRDESYYEKDSEKKGIDILDYHFHKCVNVQEFEQSRIIKFVPLDACRFELMRFKTLYNGDNLPFSLKSVVVVQGAYVELQAFVNMASLAQRSSYAGSLRSCDNIRIHFPVPSQWIKALWTMNLQRQKSLKAKMNRRACLGSLQELESEPVIQVTVGSAKYESAYQAVVWKIDRLPDKNSSLDHPHCLSYKLELGSDQEIPSDWYPFATVQFSVPDTCASRTEVRSLGVESDVQPQKHVQQRACYNIQVEIEKKWIKIDGEDPDKIGDCITQ.

The tract at residues 1–35 (MCSTNPGKWVTFDDDPAVQSSQKSKNFPLENQGVC) is disordered. An SHD domain is found at 275–408 (GWSFMLRIPE…KLPAVSKPKK (134 aa)). The 304-residue stretch at 412 to 715 (EQEISLEIVD…ACYNIQVEIE (304 aa)) folds into the MHD domain.

This sequence belongs to the Stoned B family. In terms of tissue distribution, ubiquitous.

Its subcellular location is the cytoplasm. The protein localises to the membrane. Functionally, may be involved in the endocytic machinery. In Homo sapiens (Human), this protein is Stonin-1 (STON1).